The sequence spans 136 residues: Nucleoside diphosphate kinase (136 aa).

Residues Lys10, Phe58, Arg86, Thr92, Arg104, and Asn114 each contribute to the ATP site. The Pros-phosphohistidine intermediate role is filled by His117.

It belongs to the NDK family. As to quaternary structure, homotetramer. The cofactor is Mg(2+).

Its subcellular location is the cytoplasm. It catalyses the reaction a 2'-deoxyribonucleoside 5'-diphosphate + ATP = a 2'-deoxyribonucleoside 5'-triphosphate + ADP. The enzyme catalyses a ribonucleoside 5'-diphosphate + ATP = a ribonucleoside 5'-triphosphate + ADP. Functionally, major role in the synthesis of nucleoside triphosphates other than ATP. The ATP gamma phosphate is transferred to the NDP beta phosphate via a ping-pong mechanism, using a phosphorylated active-site intermediate. This is Nucleoside diphosphate kinase from Saccharopolyspora erythraea (strain ATCC 11635 / DSM 40517 / JCM 4748 / NBRC 13426 / NCIMB 8594 / NRRL 2338).